The chain runs to 376 residues: Sulfate/thiosulfate import ATP-binding protein CysA (376 aa).

The ABC transporter domain maps to 3-237 (IRLDNISKHF…PNSRFVFDFF (235 aa)). 35–42 (GPSGSGKT) contacts ATP.

This sequence belongs to the ABC transporter superfamily. Sulfate/tungstate importer (TC 3.A.1.6) family. As to quaternary structure, the complex is composed of two ATP-binding proteins (CysA), two transmembrane proteins (CysT and CysW) and a solute-binding protein (CysP).

It localises to the cell inner membrane. The catalysed reaction is sulfate(out) + ATP + H2O = sulfate(in) + ADP + phosphate + H(+). The enzyme catalyses thiosulfate(out) + ATP + H2O = thiosulfate(in) + ADP + phosphate + H(+). In terms of biological role, part of the ABC transporter complex CysAWTP involved in sulfate/thiosulfate import. Responsible for energy coupling to the transport system. The polypeptide is Sulfate/thiosulfate import ATP-binding protein CysA (Vibrio cholerae serotype O1 (strain ATCC 39315 / El Tor Inaba N16961)).